The following is a 149-amino-acid chain: Large ribosomal subunit protein uL13 (149 aa).

It belongs to the universal ribosomal protein uL13 family. Part of the 50S ribosomal subunit.

In terms of biological role, this protein is one of the early assembly proteins of the 50S ribosomal subunit, although it is not seen to bind rRNA by itself. It is important during the early stages of 50S assembly. In Thermosipho africanus (strain TCF52B), this protein is Large ribosomal subunit protein uL13.